A 512-amino-acid polypeptide reads, in one-letter code: Glutathione-binding protein GsiB (512 aa).

Positions 1-26 are cleaved as a signal peptide; sequence MTQFITHKWLAALGLASSIAAFPALA.

The protein belongs to the bacterial solute-binding protein 5 family. In terms of assembly, the complex is composed of two ATP-binding proteins (GsiA), two transmembrane proteins (GsiC and GsiD) and a solute-binding protein (GsiB).

It is found in the periplasm. Part of the ABC transporter complex GsiABCD involved in glutathione import. Binds glutathione. The protein is Glutathione-binding protein GsiB of Salmonella typhi.